We begin with the raw amino-acid sequence, 259 residues long: Proteasome subunit alpha 1 (259 aa).

The disordered stretch occupies residues 231–259 (LVPAEPAAASESAPEPKPDTETKPADTQD). A compositionally biased stretch (low complexity) spans 233 to 243 (PAEPAAASESA). Over residues 244 to 259 (PEPKPDTETKPADTQD) the composition is skewed to basic and acidic residues.

The protein belongs to the peptidase T1A family. In terms of assembly, the 20S proteasome core is composed of 14 alpha and 14 beta subunits that assemble into four stacked heptameric rings, resulting in a barrel-shaped structure. The two inner rings, each composed of seven catalytic beta subunits, are sandwiched by two outer rings, each composed of seven alpha subunits. All four combinations of alpha- and beta-subunits (beta2-alpha1, beta2-alpha2, beta1-alpha2 and beta1-alpha1) yield fully assembled and proteolytically active proteasomes. The catalytic chamber with the active sites is on the inside of the barrel. Has probably a gated structure, the ends of the cylinder being occluded by the N-termini of the alpha-subunits. Is likely capped by the proteasome-associated ATPase, ARC. The N-terminus is blocked.

It is found in the cytoplasm. It participates in protein degradation; proteasomal Pup-dependent pathway. The formation of the proteasomal ATPase ARC-20S proteasome complex, likely via the docking of the C-termini of ARC into the intersubunit pockets in the alpha-rings, may trigger opening of the gate for substrate entry. Interconversion between the open-gate and close-gate conformations leads to a dynamic regulation of the 20S proteasome proteolysis activity. In terms of biological role, component of the proteasome core, a large protease complex with broad specificity involved in protein degradation. The R.erythropolis proteasomes are able to cleave oligopeptides after Tyr, Phe and Leu, very poorly after Arg but not after Glu. Thus, displays chymotrypsin-like activity, low trypsin-like activity but no caspase-like activity. In Rhodococcus erythropolis (Arthrobacter picolinophilus), this protein is Proteasome subunit alpha 1.